Here is a 638-residue protein sequence, read N- to C-terminus: 3D-(3,5/4)-trihydroxycyclohexane-1,2-dione hydrolase (638 aa).

Residue glutamate 67 coordinates thiamine diphosphate. Positions 442-523 are thiamine pyrophosphate binding; that stretch reads SLPGDLQRLW…INIMLFDNSG (82 aa). Mg(2+) contacts are provided by aspartate 494 and asparagine 521.

The protein belongs to the TPP enzyme family. The cofactor is Mg(2+). Thiamine diphosphate is required as a cofactor.

The catalysed reaction is 3D-3,5/4-trihydroxycyclohexane-1,2-dione + H2O = 5-deoxy-D-glucuronate + H(+). Its pathway is polyol metabolism; myo-inositol degradation into acetyl-CoA; acetyl-CoA from myo-inositol: step 3/7. Functionally, involved in the cleavage of the C1-C2 bond of 3D-(3,5/4)-trihydroxycyclohexane-1,2-dione (THcHDO) to yield 5-deoxy-glucuronate (5DG). The protein is 3D-(3,5/4)-trihydroxycyclohexane-1,2-dione hydrolase of Listeria innocua serovar 6a (strain ATCC BAA-680 / CLIP 11262).